Here is a 266-residue protein sequence, read N- to C-terminus: Non-structural maintenance of chromosomes element 1 homolog (266 aa).

Residues 1–102 are interaction with NSMCE3; sequence MQGSTRRMSV…SISKMATDFA (102 aa). An RING-type; atypical zinc finger spans residues 191–232; that stretch reads CNICHSLLIQGQSCETCGIRMHLPCVAKYFQSNAEPRCPHCN. The disordered stretch occupies residues 245–266; sequence PEKERESGVSKSNKKSLRSRQH. The residue at position 251 (Ser-251) is a Phosphoserine. Residues 256–266 are compositionally biased toward basic residues; it reads SNKKSLRSRQH.

It belongs to the NSE1 family. In terms of assembly, component of the SMC5-SMC6 complex which consists at least of SMC5, SMC6, NSMCE2, NSMCE1, NSMCE4A or EID3 and NSMCE3. NSMCE1, NSMCE4A or EID3 and NSMCE3 probably form a subcomplex that bridges the head domains of the SMC5-SMC6 heterodimer. Interacts with NSMCE3. Ubiquitinated.

The protein localises to the nucleus. The protein resides in the chromosome. It is found in the telomere. The enzyme catalyses S-ubiquitinyl-[E2 ubiquitin-conjugating enzyme]-L-cysteine + [acceptor protein]-L-lysine = [E2 ubiquitin-conjugating enzyme]-L-cysteine + N(6)-ubiquitinyl-[acceptor protein]-L-lysine.. RING-type zinc finger-containing E3 ubiquitin ligase that assembles with melanoma antigen protein (MAGE) to catalyze the direct transfer of ubiquitin from E2 ubiquitin-conjugating enzyme to a specific substrate. Within MAGE-RING ubiquitin ligase complex, MAGE stimulates and specifies ubiquitin ligase activity likely through recruitment and/or stabilization of the E2 ubiquitin-conjugating enzyme at the E3:substrate complex. Involved in maintenance of genome integrity, DNA damage response and DNA repair. NSMCE3/MAGEG1 and NSMCE1 ubiquitin ligase are components of SMC5-SMC6 complex and may positively regulate homologous recombination-mediated DNA repair. This Pongo abelii (Sumatran orangutan) protein is Non-structural maintenance of chromosomes element 1 homolog (NSMCE1).